A 127-amino-acid polypeptide reads, in one-letter code: Stationary phase protein 3 (127 aa).

Helical transmembrane passes span 29 to 49 and 63 to 83; these read LFLF…FYVI and ANSI…CFFL. N-linked (GlcNAc...) asparagine glycosylation is present at N86.

The protein resides in the membrane. Required for survival during stationary phase. This is Stationary phase protein 3 (SPG3) from Saccharomyces cerevisiae (strain ATCC 204508 / S288c) (Baker's yeast).